The primary structure comprises 102 residues: RNA-binding protein Hfq (102 aa).

In terms of domain architecture, Sm spans 9–68 (DPFLNALRRERVPVSIYLVNGIKLQGQIESFDQFVILLKNTVSQMVYKHAISTVVPSRPV). Residues 63-102 (VPSRPVSHHSNNAGGGASNNYHHGSNVQGSTAQQDSEETE) form a disordered region. Residues 70 to 88 (HHSNNAGGGASNNYHHGSN) show a composition bias toward low complexity.

It belongs to the Hfq family. In terms of assembly, homohexamer.

Functionally, RNA chaperone that binds small regulatory RNA (sRNAs) and mRNAs to facilitate mRNA translational regulation in response to envelope stress, environmental stress and changes in metabolite concentrations. Also binds with high specificity to tRNAs. The sequence is that of RNA-binding protein Hfq from Salmonella choleraesuis (strain SC-B67).